A 500-amino-acid polypeptide reads, in one-letter code: L-arabinose isomerase (500 aa).

Glutamate 306, glutamate 333, histidine 349, and histidine 448 together coordinate Mn(2+).

This sequence belongs to the arabinose isomerase family. Requires Mn(2+) as cofactor.

It carries out the reaction beta-L-arabinopyranose = L-ribulose. It functions in the pathway carbohydrate degradation; L-arabinose degradation via L-ribulose; D-xylulose 5-phosphate from L-arabinose (bacterial route): step 1/3. In terms of biological role, catalyzes the conversion of L-arabinose to L-ribulose. The polypeptide is L-arabinose isomerase (Shewanella sp. (strain ANA-3)).